The chain runs to 263 residues: Benzil reductase ((S)-benzoin forming) IRC24 (263 aa).

Isoleucine 7 and asparagine 86 together coordinate NADP(+). The Proton donor role is filled by serine 143. NADP(+) contacts are provided by tyrosine 157, lysine 161, valine 190, and threonine 192. Residue tyrosine 157 is the Proton acceptor of the active site. The Lowers pKa of active site Tyr role is filled by lysine 161.

It belongs to the short-chain dehydrogenases/reductases (SDR) family.

It carries out the reaction (S)-benzoin + NADP(+) = benzil + NADPH + H(+). It catalyses the reaction 2-hydroxy-1-phenyl-1-propanone + NADP(+) = 1-phenyl-1,2-propanedione + NADPH + H(+). Functionally, reduces benzil stereospecifically to (S)-benzoin. Also reduces 1-phenyl-1,2-propanedione to 2-hydroxy-1-phenyl-1-propanone. Is probably involved in a pathway contributing to genomic integrity. This Saccharomyces cerevisiae (strain ATCC 204508 / S288c) (Baker's yeast) protein is Benzil reductase ((S)-benzoin forming) IRC24 (IRC24).